The sequence spans 619 residues: CREB-regulated transcription coactivator 3 (619 aa).

A phosphoserine mark is found at Ser4 and Ser62. The segment at 129–148 (SQHLDESWPRQQPPWKEEKH) is disordered. Thr160 carries the post-translational modification Phosphothreonine. The residue at position 162 (Ser162) is a Phosphoserine; by SIK2. A Glycyl lysine isopeptide (Lys-Gly) (interchain with G-Cter in SUMO2) cross-link involves residue Lys232. Phosphoserine is present on residues Ser273, Ser329, Ser332, Ser370, Ser391, Ser396, and Ser410. The disordered stretch occupies residues 375 to 478 (STTNLSGPSR…TQQPQAAPSL (104 aa)). The tract at residues 380–401 (SGPSRRRQPPVSPLTLSPGPEA) is required for interaction with PPP2CA and PPP2R1A. 2 stretches are compositionally biased toward polar residues: residues 405–415 (FSRQLSATSPL) and 422–431 (QMVTSEQSPL). A Phosphoserine modification is found at Ser443. The segment covering 443 to 454 (SPPPPYPTPQEL) has biased composition (pro residues). Residues 455–478 (PQPLLQQPHAQEPPTQQPQAAPSL) show a composition bias toward low complexity.

Belongs to the TORC family. As to quaternary structure, binding, as a tetramer, through its N-terminal region, with the bZIP domain of CREB1 enhances recruitment of TAF4 to the promoter. 'Arg-314' in the bZIP domain of CREB1 is essential for this interaction. Interacts (when phosphorylated at Ser-162 and Se-273) with 14-3-3 proteins. Interacts with YWHAE. Interacts (when phosphorylated at Ser-391) with phosphatase PP2A catalytic subunit PPP2CA and regulatory subunits PPP2R1A and PPP2R2A. In terms of processing, phosphorylation/dephosphorylation states of Ser-273 are required for regulating transduction of CREB activity. CRTCs/TORCs are inactive when phosphorylated, and active when dephosphorylated at this site. May be phosphorylated at Ser-391 by MAPK3/ERK1 and/or MAPK1/ERK2 or by some cyclin-dependent kinases such as CDK1,CDK2 or CDK5. Following adenylyl cyclase activation, dephosphorylated at Ser-162 and Ser-273 resulting in its dissociation from 14-3-3 proteins probably promoting CRTC3 translocation into the nucleus. Expressed in brown adipose tissues.

The protein localises to the nucleus. The protein resides in the cytoplasm. Its function is as follows. Transcriptional coactivator for CREB1 which activates transcription through both consensus and variant cAMP response element (CRE) sites. Acts as a coactivator, in the SIK/TORC signaling pathway, being active when dephosphorylated. Acts independently of CREB1 'Ser-133' phosphorylation. Enhances the interaction of CREB1 with TAF4. Regulates the expression of specific CREB-activated genes such as the steroidogenic gene, StAR. Potent coactivator of PPARGC1A and inducer of mitochondrial biogenesis in muscle cells. This chain is CREB-regulated transcription coactivator 3 (Crtc3), found in Mus musculus (Mouse).